The following is a 443-amino-acid chain: MTRWLFMVACLGIACQGAILRENSARNLKNSLKVMHEWKYIDYDFGSEEKRQAAIQSDEYDHTKNYPFDVDQWRDKTFVTVLRYDGVPSSLNVISEKTGNGGRLLQPYPDWSWTKYKDCSGIVSAYSIAIDKFDRLWVLDSGLVNNTQPMCFPKLLVFDLNSSQLIKQVDIPHEIAVNTTTEQGRLKSLAVQAISSVNTLVYIADNKGDGLIVYQNSDDSFHRLTSNTFNYDPRYTKMTVEGESFTVQDGIYGMALSPMTNNLYYSPLASRDLYYVNTKPFIKSEYGENKVQYNGVQDVFNTQTTAKAVSKNGILFFGLVNNTAVGCWNEHQTLQRENTDMVAQNEETLQMIVGMKIKQLLPHIVIIDIDNIINDEYMLVLTNRMQKILNNDLNFNDINFRILIGGVSDLLENTRCTNFNIQNDDSDENNDDSIRITIDASFN.

The first 17 residues, 1–17 (MTRWLFMVACLGIACQG), serve as a signal peptide directing secretion. N-linked (GlcNAc...) asparagine glycosylation is found at Asn-145, Asn-161, Asn-178, and Asn-321.

Belongs to the major royal jelly protein family. In terms of tissue distribution, found in and secreted from the hypopharyngeal glands of the worker honey bee (at protein level); expression peaks at 12 days post eclosion. Expressed in the brains of adult worker bees peaking at 12 days post eclosion (at protein level). Expressed in the spermatheca of adult queen bees (at protein level); Expression levels are higher in mated queens than in virgin queens.

The protein localises to the secreted. In terms of biological role, component of royal jelly, a substance produced in the hypopharyngeal gland containing proteins, free amino acids, fatty acids, sugars and other nutrients, which is fed to developing larvae by worker nurse bees. All larvae are fed some royal jelly (also known as worker jelly) early in their development but it forms the principal source of nutrition for larvae destined to become queen bees. Produced in the spermatheca of adult queen bees, along with other major royal jelly proteins, where it may act as a nutrient supply for sperm stored by mated queens, or be involved in energy metabolism. The polypeptide is Major royal jelly protein 7 (Apis mellifera (Honeybee)).